We begin with the raw amino-acid sequence, 151 residues long: Large ribosomal subunit protein uL15 (151 aa).

Positions 1-58 (MELNQLKSVPKARNHKTKTLGRGHGSGLGKTSGRGQKGQKARKSGLTRPGFEGGQTPL) are disordered. Basic residues predominate over residues 10-21 (PKARNHKTKTLG). The segment covering 22–36 (RGHGSGLGKTSGRGQ) has biased composition (gly residues).

The protein belongs to the universal ribosomal protein uL15 family. Part of the 50S ribosomal subunit.

Functionally, binds to the 23S rRNA. The sequence is that of Large ribosomal subunit protein uL15 from Mycoplasma pneumoniae (strain ATCC 29342 / M129 / Subtype 1) (Mycoplasmoides pneumoniae).